A 113-amino-acid polypeptide reads, in one-letter code: Beta-defensin 112 (113 aa).

Cystine bridges form between C54–C82, C61–C75, and C65–C83.

It belongs to the beta-defensin family.

The protein resides in the secreted. Functionally, has antibacterial activity. This chain is Beta-defensin 112 (DEFB112), found in Pan troglodytes (Chimpanzee).